The chain runs to 187 residues: Cell division protein SepF (187 aa).

Belongs to the SepF family. In terms of assembly, homodimer. Interacts with FtsZ.

It localises to the cytoplasm. Cell division protein that is part of the divisome complex and is recruited early to the Z-ring. Probably stimulates Z-ring formation, perhaps through the cross-linking of FtsZ protofilaments. Its function overlaps with FtsA. This is Cell division protein SepF from Streptococcus suis (strain 98HAH33).